The chain runs to 543 residues: Glutamyl-tRNA(Gln) amidotransferase subunit A, chloroplastic/mitochondrial (543 aa).

Residues Lys123 and Ser198 each act as charge relay system in the active site. The Acyl-ester intermediate role is filled by Ser222.

Belongs to the amidase family. GatA subfamily. As to quaternary structure, subunit of the heterotrimeric GatCAB amidotransferase (AdT) complex, composed of A, B and C subunits.

Its subcellular location is the mitochondrion. It is found in the plastid. The protein resides in the chloroplast stroma. The catalysed reaction is L-glutamyl-tRNA(Gln) + L-glutamine + ATP + H2O = L-glutaminyl-tRNA(Gln) + L-glutamate + ADP + phosphate + H(+). Its function is as follows. Allows the formation of correctly charged Gln-tRNA(Gln) through the transamidation of misacylated Glu-tRNA(Gln) in chloroplasts and mitochondria. The reaction takes place in the presence of glutamine and ATP through an activated gamma-phospho-Glu-tRNA(Gln). This Oryza sativa subsp. indica (Rice) protein is Glutamyl-tRNA(Gln) amidotransferase subunit A, chloroplastic/mitochondrial.